A 445-amino-acid chain; its full sequence is UPF0210 protein Ccon26_06850 (445 aa).

This sequence belongs to the UPF0210 family. As to quaternary structure, homodimer.

The protein is UPF0210 protein Ccon26_06850 of Campylobacter concisus (strain 13826).